Consider the following 808-residue polypeptide: Potassium transporter 5 (808 aa).

At 1–65 (MAEEVGETRG…NQVNWKKTLS (65 aa)) the chain is on the cytoplasmic side. Residues 66 to 86 (LTFQSIGVVYGDIGTSPLYVY) form a helical membrane-spanning segment. The Extracellular segment spans residues 87-102 (ESTFPDKIGSKEDILG). A helical transmembrane segment spans residues 103-123 (VLSLIIYTLVLLPMLKYVFIV). At 124–189 (LRANDNGDGG…EKMENSKNIK (66 aa)) the chain is on the cytoplasmic side. Residues 190-210 (ILLFLVTILGTSMVIGDGVLT) traverse the membrane as a helical segment. The Extracellular segment spans residues 211–221 (PCISVLSAVSG). Residues 222–242 (IGSLGQDAVVGISIAILIVLF) traverse the membrane as a helical segment. Topologically, residues 243–251 (CAQRLGTDK) are cytoplasmic. The helical transmembrane segment at 252 to 272 (VGFSFAPIILLWFSFIGGIGL) threads the bilayer. The Extracellular portion of the chain corresponds to 273–302 (YNLFKYDVSVLRAFNPKYMFDYFKRNGKQG). Residues 303–323 (WISLGGVVLAVTGTEAMFADL) traverse the membrane as a helical segment. Topologically, residues 324–327 (GHFN) are cytoplasmic. A helical membrane pass occupies residues 328 to 348 (VQAIQISFSGIVFPALLCAYA). Residues 349-379 (GQAAYLTKFPDDVSKTFYKSIPDPLYWPTFV) lie on the Extracellular side of the membrane. A helical membrane pass occupies residues 380–400 (VAVAAAIIASQAMISGAFAII). Over 401 to 424 (SQSLSLGCFPRVKVIHTSAKYEGQ) the chain is Cytoplasmic. The helical transmembrane segment at 425-445 (VYIPEVNYILMIACIMVCLGF) threads the bilayer. At 446–456 (KTTEKIGNAYG) the chain is on the extracellular side. The chain crosses the membrane as a helical span at residues 457–477 (IAVVAVMVITTCMVTIIMLVV). The Cytoplasmic segment spans residues 478–482 (WRTKM). Residues 483–503 (IWIAFFFFGFICIEAVYLSSV) traverse the membrane as a helical segment. Residues 504–510 (LYKFKDG) lie on the Extracellular side of the membrane. A helical membrane pass occupies residues 511 to 531 (GFLPLAFSFFLMIIMGIWHYI). Residues 532–808 (HKERYMYELK…LLRVGMTYEI (277 aa)) lie on the Cytoplasmic side of the membrane. The tract at residues 699–722 (LQQPNPSRVSSGSIHSNSGIKSTK) is disordered.

It belongs to the HAK/KUP transporter (TC 2.A.72.3) family. As to expression, expressed in the roots.

It localises to the cell membrane. The catalysed reaction is K(+)(in) = K(+)(out). High-affinity potassium transporter that functions under low potassium conditions. Involved in the positive regulation of salt tolerance under salt stress. The polypeptide is Potassium transporter 5 (Manihot esculenta (Cassava)).